The following is a 184-amino-acid chain: MAGEHVILLDEQDQPAGMLEKYAAHTFDTPLHLAFSCWLFNQQGQLLVTRRSLGKKAWPGVWTNSVCGHPQQGETFEQAVTRRCRFELGVEISDIAPVHPAFRYRAVAPNGIVENEVCPVYAARVVSEVQPNDDEVMDYQWVDLATMLSALAATPWAFSPWMVLEAENRDARQALTDFVARLRG.

Residues His25 and His32 each coordinate Mn(2+). The 135-residue stretch at 30 to 164 (PLHLAFSCWL…PWAFSPWMVL (135 aa)) folds into the Nudix hydrolase domain. Residue Cys67 is part of the active site. His69 is a Mn(2+) binding site. Position 87 (Glu87) interacts with Mg(2+). Mn(2+) contacts are provided by Glu114 and Glu116. Glu116 is a catalytic residue.

The protein belongs to the IPP isomerase type 1 family. In terms of assembly, homodimer. The cofactor is Mg(2+). Requires Mn(2+) as cofactor.

The protein resides in the cytoplasm. It catalyses the reaction isopentenyl diphosphate = dimethylallyl diphosphate. The protein operates within isoprenoid biosynthesis; dimethylallyl diphosphate biosynthesis; dimethylallyl diphosphate from isopentenyl diphosphate: step 1/1. Catalyzes the 1,3-allylic rearrangement of the homoallylic substrate isopentenyl (IPP) to its highly electrophilic allylic isomer, dimethylallyl diphosphate (DMAPP). This is Isopentenyl-diphosphate Delta-isomerase from Klebsiella pneumoniae subsp. pneumoniae (strain ATCC 700721 / MGH 78578).